An 89-amino-acid chain; its full sequence is UPF0335 protein Caul_0876 (89 aa).

Belongs to the UPF0335 family.

The polypeptide is UPF0335 protein Caul_0876 (Caulobacter sp. (strain K31)).